Reading from the N-terminus, the 166-residue chain is Ribosomal RNA large subunit methyltransferase H (166 aa).

S-adenosyl-L-methionine contacts are provided by residues leucine 85, glycine 116, and 135–140; that span reads ISKMTF.

This sequence belongs to the RNA methyltransferase RlmH family. As to quaternary structure, homodimer.

It is found in the cytoplasm. The enzyme catalyses pseudouridine(1915) in 23S rRNA + S-adenosyl-L-methionine = N(3)-methylpseudouridine(1915) in 23S rRNA + S-adenosyl-L-homocysteine + H(+). Functionally, specifically methylates the pseudouridine at position 1915 (m3Psi1915) in 23S rRNA. This is Ribosomal RNA large subunit methyltransferase H from Francisella tularensis subsp. holarctica (strain FTNF002-00 / FTA).